A 543-amino-acid polypeptide reads, in one-letter code: MLKKNDIVEVEIVDLTHEGAGVAKVDGLVFFVENALPSEKILMRVLKVNKKIGFGKVEKYLVQSPHRNQDLDLAYLRSGIADLGHLSYPEQLKFKTKQVKDSLYKIAGIADVEVAETLGMEHPVKYRNKAQVPVRRVNGVLETGFFRKNSHNLMPLEDFFIQDPVIDQVVVALRDLLRRFDLKPYDEKEQSGLIRNLVVRRGHYSGQIMVVLVTTRPKVFRVDQLIEQVIKQFPEIVSVMQNINDQNTNAIFGKEWRTLYGQDYITDQMLGNDFQIAGPAFYQVNTEMAEKLYQTAIDFAELKKDDVIIDAYSGIGTIGLSVAKHVKEVYGVELIPEAVENSQKNASLNKITNAHYVCDTAENAMKKWLKEGIQPTVILVDPPRKGLTESFIKASAQTGADRIAYISCNVATMARDIKLYQELGYELKKVQPVDLFPQTHHVETVALLSKLDVDKHISVEIELDEMDLTSAESKATYAQIKEYVWNKFELKVSTLYIAQIKKKCGIELREHYNKSKKDKQIIPQCTPEKEEAIMDALRHFKMI.

Residues 1-59 (MLKKNDIVEVEIVDLTHEGAGVAKVDGLVFFVENALPSEKILMRVLKVNKKIGFGKVEK) enclose the TRAM domain. 4 residues coordinate S-adenosyl-L-methionine: Q283, Y312, E333, and D381. C408 acts as the Nucleophile in catalysis.

Belongs to the class I-like SAM-binding methyltransferase superfamily. RNA M5U methyltransferase family.

This is an uncharacterized protein from Streptococcus pneumoniae serotype 4 (strain ATCC BAA-334 / TIGR4).